The following is a 387-amino-acid chain: 23S rRNA (uracil(747)-C(5))-methyltransferase RlmC (387 aa).

[4Fe-4S] cluster is bound by residues Cys3, Cys11, Cys14, and Cys86. 4 residues coordinate S-adenosyl-L-methionine: Gln211, Phe240, Glu269, and Asn319. The active-site Nucleophile is Cys346.

The protein belongs to the class I-like SAM-binding methyltransferase superfamily. RNA M5U methyltransferase family. RlmC subfamily.

It catalyses the reaction uridine(747) in 23S rRNA + S-adenosyl-L-methionine = 5-methyluridine(747) in 23S rRNA + S-adenosyl-L-homocysteine + H(+). Its function is as follows. Catalyzes the formation of 5-methyl-uridine at position 747 (m5U747) in 23S rRNA. In Pasteurella multocida (strain Pm70), this protein is 23S rRNA (uracil(747)-C(5))-methyltransferase RlmC.